Consider the following 329-residue polypeptide: 4-diphosphocytidyl-2-C-methyl-D-erythritol kinase (329 aa).

Lys14 is a catalytic residue. An ATP-binding site is contributed by 117–127; it reads PSGAGMGGASS. Asp166 is an active-site residue.

Belongs to the GHMP kinase family. IspE subfamily.

It catalyses the reaction 4-CDP-2-C-methyl-D-erythritol + ATP = 4-CDP-2-C-methyl-D-erythritol 2-phosphate + ADP + H(+). Its pathway is isoprenoid biosynthesis; isopentenyl diphosphate biosynthesis via DXP pathway; isopentenyl diphosphate from 1-deoxy-D-xylulose 5-phosphate: step 3/6. Catalyzes the phosphorylation of the position 2 hydroxy group of 4-diphosphocytidyl-2C-methyl-D-erythritol. The protein is 4-diphosphocytidyl-2-C-methyl-D-erythritol kinase of Rhodopirellula baltica (strain DSM 10527 / NCIMB 13988 / SH1).